Here is a 729-residue protein sequence, read N- to C-terminus: Fatty acid oxidation complex subunit alpha (729 aa).

The interval 1–189 (MLYKGDTLYL…KIGLVDGVVK (189 aa)) is enoyl-CoA hydratase/isomerase. A substrate-binding site is contributed by Asp-296. The tract at residues 311–729 (ETPKQAAVLG…ARPVGSLKTA (419 aa)) is 3-hydroxyacyl-CoA dehydrogenase. NAD(+) is bound by residues Met-324, Asp-343, 400-402 (VVE), Lys-407, and Ser-429. His-450 serves as the catalytic For 3-hydroxyacyl-CoA dehydrogenase activity. Asn-453 lines the NAD(+) pocket. Substrate is bound by residues Asn-500 and Tyr-660. Positions 708 to 729 (RHNEPYYPPVEPARPVGSLKTA) are disordered.

It in the N-terminal section; belongs to the enoyl-CoA hydratase/isomerase family. In the C-terminal section; belongs to the 3-hydroxyacyl-CoA dehydrogenase family. As to quaternary structure, heterotetramer of two alpha chains (FadB) and two beta chains (FadA).

It catalyses the reaction a (3S)-3-hydroxyacyl-CoA + NAD(+) = a 3-oxoacyl-CoA + NADH + H(+). It carries out the reaction a (3S)-3-hydroxyacyl-CoA = a (2E)-enoyl-CoA + H2O. The enzyme catalyses a 4-saturated-(3S)-3-hydroxyacyl-CoA = a (3E)-enoyl-CoA + H2O. The catalysed reaction is (3S)-3-hydroxybutanoyl-CoA = (3R)-3-hydroxybutanoyl-CoA. It catalyses the reaction a (3Z)-enoyl-CoA = a 4-saturated (2E)-enoyl-CoA. It carries out the reaction a (3E)-enoyl-CoA = a 4-saturated (2E)-enoyl-CoA. The protein operates within lipid metabolism; fatty acid beta-oxidation. Functionally, involved in the aerobic and anaerobic degradation of long-chain fatty acids via beta-oxidation cycle. Catalyzes the formation of 3-oxoacyl-CoA from enoyl-CoA via L-3-hydroxyacyl-CoA. It can also use D-3-hydroxyacyl-CoA and cis-3-enoyl-CoA as substrate. The chain is Fatty acid oxidation complex subunit alpha from Salmonella newport (strain SL254).